The primary structure comprises 633 residues: Chaperone protein DnaK (633 aa).

T196 carries the phosphothreonine; by autocatalysis modification. The disordered stretch occupies residues 594–633; that stretch reads NLYGQPGAEPQPETNGHAGGSKGGDGAVNAEYEVIDGDDK. Positions 610 to 619 are enriched in gly residues; it reads HAGGSKGGDG.

Belongs to the heat shock protein 70 family.

Functionally, acts as a chaperone. The chain is Chaperone protein DnaK from Chlorobaculum tepidum (strain ATCC 49652 / DSM 12025 / NBRC 103806 / TLS) (Chlorobium tepidum).